We begin with the raw amino-acid sequence, 337 residues long: DNA-directed RNA polymerase subunit alpha (337 aa).

Positions 1–233 (MVREKVTVST…DLFIPFLHAQ (233 aa)) are alpha N-terminal domain (alpha-NTD). An alpha C-terminal domain (alpha-CTD) region spans residues 267 to 337 (IALKYIFIDQ…FTVDLPKNKF (71 aa)).

It belongs to the RNA polymerase alpha chain family. In plastids the minimal PEP RNA polymerase catalytic core is composed of four subunits: alpha, beta, beta', and beta''. When a (nuclear-encoded) sigma factor is associated with the core the holoenzyme is formed, which can initiate transcription.

The protein resides in the plastid. Its subcellular location is the chloroplast. The enzyme catalyses RNA(n) + a ribonucleoside 5'-triphosphate = RNA(n+1) + diphosphate. In terms of biological role, DNA-dependent RNA polymerase catalyzes the transcription of DNA into RNA using the four ribonucleoside triphosphates as substrates. The protein is DNA-directed RNA polymerase subunit alpha of Platanus occidentalis (Sycamore).